The chain runs to 566 residues: Arginine--tRNA ligase (566 aa).

A 'HIGH' region motif is present at residues 121–131 (ANPNGPFHIGH).

It belongs to the class-I aminoacyl-tRNA synthetase family.

The protein localises to the cytoplasm. The enzyme catalyses tRNA(Arg) + L-arginine + ATP = L-arginyl-tRNA(Arg) + AMP + diphosphate. This chain is Arginine--tRNA ligase, found in Methanococcus maripaludis (strain C7 / ATCC BAA-1331).